The sequence spans 365 residues: Tartrate dehydrogenase/decarboxylase (365 aa).

3 residues coordinate Mn(2+): Asp225, Asp250, and Asp254.

This sequence belongs to the isocitrate and isopropylmalate dehydrogenases family. In terms of assembly, homodimer. Mg(2+) serves as cofactor. It depends on Mn(2+) as a cofactor. The cofactor is K(+).

The protein localises to the cytoplasm. It catalyses the reaction tartrate + NAD(+) = 2-hydroxy-3-oxosuccinate + NADH + H(+). The enzyme catalyses (2R,3S)-tartrate + NAD(+) = 2-hydroxy-3-oxosuccinate + NADH + H(+). The catalysed reaction is (2R,3R)-tartrate + NAD(+) = 2-hydroxy-3-oxosuccinate + NADH + H(+). It carries out the reaction (2R,3R)-tartrate + H(+) = (R)-glycerate + CO2. It catalyses the reaction (R)-malate + NAD(+) = pyruvate + CO2 + NADH. Its pathway is carbohydrate acid metabolism; tartrate degradation; 2-hydroxy-3-oxosuccinate from L-tartrate: step 1/1. It participates in carbohydrate acid metabolism; tartrate degradation; 2-hydroxy-3-oxosuccinate from meso-tartrate: step 1/1. It functions in the pathway carbohydrate acid metabolism; tartrate degradation; D-glycerate from L-tartrate: step 1/1. In terms of biological role, has multiple catalytic activities. Apart from catalyzing the oxidation of (+)-tartrate to oxaloglycolate, also converts meso-tartrate to D-glycerate and catalyzes the oxidative decarboxylation of D-malate to pyruvate. This chain is Tartrate dehydrogenase/decarboxylase, found in Pseudomonas putida (Arthrobacter siderocapsulatus).